A 314-amino-acid chain; its full sequence is Glycerate dehydrogenase (314 aa).

NAD(+) contacts are provided by residues T74, 157–158 (AL), 228–230 (TAR), and D254. R230 is a catalytic residue. The active site involves E259. H280 serves as the catalytic Proton donor. 280-283 (HVAW) is an NAD(+) binding site.

This sequence belongs to the D-isomer specific 2-hydroxyacid dehydrogenase family. As to quaternary structure, homodimer.

It localises to the cytoplasm. It carries out the reaction (R)-glycerate + NAD(+) = 3-hydroxypyruvate + NADH + H(+). Its pathway is one-carbon metabolism; formaldehyde assimilation via serine pathway. Its function is as follows. Plays a central role in assimilation of carbon. It converts hydroxypyruvate to glycerate as a key step in the serine cycle, and may also play an important role in C2 reactions, by interconverting glyoxylate and glycolate. In Methylorubrum extorquens (strain ATCC 14718 / DSM 1338 / JCM 2805 / NCIMB 9133 / AM1) (Methylobacterium extorquens), this protein is Glycerate dehydrogenase (hprA).